The following is a 358-amino-acid chain: Phosphoribosylformylglycinamidine cyclo-ligase (358 aa).

This sequence belongs to the AIR synthase family.

It localises to the cytoplasm. It catalyses the reaction 2-formamido-N(1)-(5-O-phospho-beta-D-ribosyl)acetamidine + ATP = 5-amino-1-(5-phospho-beta-D-ribosyl)imidazole + ADP + phosphate + H(+). Its pathway is purine metabolism; IMP biosynthesis via de novo pathway; 5-amino-1-(5-phospho-D-ribosyl)imidazole from N(2)-formyl-N(1)-(5-phospho-D-ribosyl)glycinamide: step 2/2. The polypeptide is Phosphoribosylformylglycinamidine cyclo-ligase (Chromohalobacter salexigens (strain ATCC BAA-138 / DSM 3043 / CIP 106854 / NCIMB 13768 / 1H11)).